Reading from the N-terminus, the 257-residue chain is Hydroxyacylglutathione hydrolase (257 aa).

Zn(2+)-binding residues include histidine 54, histidine 56, aspartate 58, histidine 59, histidine 113, aspartate 137, and histidine 175.

It belongs to the metallo-beta-lactamase superfamily. Glyoxalase II family. In terms of assembly, monomer. Zn(2+) is required as a cofactor.

The enzyme catalyses an S-(2-hydroxyacyl)glutathione + H2O = a 2-hydroxy carboxylate + glutathione + H(+). It participates in secondary metabolite metabolism; methylglyoxal degradation; (R)-lactate from methylglyoxal: step 2/2. Functionally, thiolesterase that catalyzes the hydrolysis of S-D-lactoyl-glutathione to form glutathione and D-lactic acid. The polypeptide is Hydroxyacylglutathione hydrolase (Synechocystis sp. (strain ATCC 27184 / PCC 6803 / Kazusa)).